Reading from the N-terminus, the 37-residue chain is TLTGYIANFSVLNXEAYLFINDKYVLLDYAPGTXNDK.

The Hemopexin repeat unit spans residues 6–37 (IANFSVLNXEAYLFINDKYVLLDYAPGTXNDK).

As to quaternary structure, dimer. As to expression, expressed in seeds (at protein level).

Its subcellular location is the cytoplasm. It is found in the cytosol. In terms of biological role, binds hemin and thiamine. The protein is Albumin-2 of Lens culinaris (Lentil).